We begin with the raw amino-acid sequence, 152 residues long: Nucleoside diphosphate kinase A 2 (152 aa).

ATP is bound by residues Lys12, Phe60, Arg88, Thr94, Arg105, and Asn115. His118 serves as the catalytic Pros-phosphohistidine intermediate.

The protein belongs to the NDK family. As to quaternary structure, homohexamer. The cofactor is Mg(2+). In terms of processing, the N-terminus is blocked.

It localises to the cytoplasm. The protein localises to the cell membrane. Its subcellular location is the nucleus. It carries out the reaction a 2'-deoxyribonucleoside 5'-diphosphate + ATP = a 2'-deoxyribonucleoside 5'-triphosphate + ADP. It catalyses the reaction a ribonucleoside 5'-diphosphate + ATP = a ribonucleoside 5'-triphosphate + ADP. With respect to regulation, autophosphorylation at His-118 increases serine/threonine protein kinase activity of the enzyme. Interaction with the SET complex inhibits exonuclease activity. Its function is as follows. Major role in the synthesis of nucleoside triphosphates other than ATP. Possesses nucleoside-diphosphate kinase, serine/threonine-specific protein kinase, geranyl and farnesyl pyrophosphate kinase, histidine protein kinase and 3'-5' exonuclease activities. Involved in cell proliferation, differentiation and development, signal transduction, G protein-coupled receptor endocytosis, and gene expression. Required for neural development including neural patterning and cell fate determination. In Bos taurus (Bovine), this protein is Nucleoside diphosphate kinase A 2 (NME1-2).